The following is a 436-amino-acid chain: Homeobox protein PKNOX1 (436 aa).

Residues 1–20 are compositionally biased toward polar residues; sequence MMATQTLSIDSYQDGQQMQV. Residues 1–49 are disordered; it reads MMATQTLSIDSYQDGQQMQVVTELKTEQDPNCSEPDAEGVSPPPVESQT. A phosphoserine mark is found at Ser33 and Ser41. The region spanning 80–163 is the MEIS N-terminal domain; the sequence is GSEGTTSASF…MNSETLLSGE (84 aa). A DNA-binding region (homeobox; TALE-type) is located at residues 259-321; sequence SKNKRGVLPK…NARRRILQPM (63 aa). Residues 401–436 are disordered; that stretch reads AGQSEDESVDSTEEDAGALAPAHISGLVLENSDSLQ. Residues 404 to 416 show a composition bias toward acidic residues; the sequence is SEDESVDSTEEDA.

This sequence belongs to the TALE/MEIS homeobox family. Interacts with MN1. Ubiquitous. Isoform 2 is expressed in all examined tissues except in bone marrow.

The protein resides in the nucleus. In terms of biological role, activates transcription in the presence of PBX1A and HOXA1. This chain is Homeobox protein PKNOX1, found in Homo sapiens (Human).